The following is a 650-amino-acid chain: Chaperone protein DnaK (650 aa).

T200 carries the phosphothreonine; by autocatalysis modification. The segment covering 611–634 (AQQAGAAGAAGAAAEGASAQGGAQ) has biased composition (low complexity). A disordered region spans residues 611 to 650 (AQQAGAAGAAGAAAEGASAQGGAQPPDDVVDADFKEVKKD).

This sequence belongs to the heat shock protein 70 family.

Acts as a chaperone. This chain is Chaperone protein DnaK, found in Burkholderia pseudomallei (strain 1710b).